Here is a 292-residue protein sequence, read N- to C-terminus: Cytidine deaminase (292 aa).

CMP/dCMP-type deaminase domains follow at residues 47 to 167 and 186 to 292; these read TPLK…FGPK and DHQD…YYSL. 88–90 provides a ligand contact to substrate; that stretch reads NQE. H101 contacts Zn(2+). E103 acts as the Proton donor in catalysis. The Zn(2+) site is built by C128 and C131.

It belongs to the cytidine and deoxycytidylate deaminase family. As to quaternary structure, homodimer. It depends on Zn(2+) as a cofactor.

The catalysed reaction is cytidine + H2O + H(+) = uridine + NH4(+). It carries out the reaction 2'-deoxycytidine + H2O + H(+) = 2'-deoxyuridine + NH4(+). Its function is as follows. This enzyme scavenges exogenous and endogenous cytidine and 2'-deoxycytidine for UMP synthesis. This is Cytidine deaminase from Haemophilus influenzae (strain 86-028NP).